We begin with the raw amino-acid sequence, 594 residues long: Elongation factor 4 (594 aa).

Positions 2-184 constitute a tr-type G domain; sequence KNIRNFSIIA…TIVAKVPAPE (183 aa). GTP-binding positions include 14–19 and 131–134; these read DHGKST and NKID.

This sequence belongs to the TRAFAC class translation factor GTPase superfamily. Classic translation factor GTPase family. LepA subfamily.

The protein localises to the cell inner membrane. The enzyme catalyses GTP + H2O = GDP + phosphate + H(+). Its function is as follows. Required for accurate and efficient protein synthesis under certain stress conditions. May act as a fidelity factor of the translation reaction, by catalyzing a one-codon backward translocation of tRNAs on improperly translocated ribosomes. Back-translocation proceeds from a post-translocation (POST) complex to a pre-translocation (PRE) complex, thus giving elongation factor G a second chance to translocate the tRNAs correctly. Binds to ribosomes in a GTP-dependent manner. The sequence is that of Elongation factor 4 from Francisella tularensis subsp. tularensis (strain WY96-3418).